Reading from the N-terminus, the 274-residue chain is Large ribosomal subunit protein uL2 (274 aa).

The tract at residues 222–257 is disordered; that stretch reads GVAMNPVDHPHGGGEGRTSGGRHPVSPWGVPTKGYK.

The protein belongs to the universal ribosomal protein uL2 family. In terms of assembly, part of the 50S ribosomal subunit. Forms a bridge to the 30S subunit in the 70S ribosome.

Its function is as follows. One of the primary rRNA binding proteins. Required for association of the 30S and 50S subunits to form the 70S ribosome, for tRNA binding and peptide bond formation. It has been suggested to have peptidyltransferase activity; this is somewhat controversial. Makes several contacts with the 16S rRNA in the 70S ribosome. The polypeptide is Large ribosomal subunit protein uL2 (Nitrosococcus oceani (strain ATCC 19707 / BCRC 17464 / JCM 30415 / NCIMB 11848 / C-107)).